Reading from the N-terminus, the 449-residue chain is Protein tweety homolog 1 (449 aa).

Over 1 to 43 (MSSSHGYRASWWTYILHQVPHTNFQFEVVDNQFAPQEWPYQQA) the chain is Extracellular. The helical transmembrane segment at 44–64 (LLFLASIAGLCLAISLILICV) threads the bilayer. Residues 65 to 86 (YLIRFCCCSSQEDDDSKSHRVC) are Cytoplasmic-facing. The helical transmembrane segment at 87 to 107 (CVTWSCVAAVIICCAGIGIGF) threads the bilayer. Topologically, residues 108 to 212 (YGNSETNDGV…QVNFIEDYRW (105 aa)) are extracellular. Residue N128 is glycosylated (N-linked (GlcNAc...) asparagine). Residues 213–233 (LAYILLLLLDLIICLFTLLGL) traverse the membrane as a helical segment. At 234–238 (AKQIK) the chain is on the cytoplasmic side. Residues 239 to 259 (WLVIVMTVVSFFVLLLSWGSM) traverse the membrane as a helical segment. At 260-388 (GLEMATAVGL…LKGLCYDGME (129 aa)) the chain is on the extracellular side. 2 cysteine pairs are disulfide-bonded: C273/C383 and C301/C368. N-linked (GlcNAc...) asparagine glycosylation is found at N282 and N353. A helical transmembrane segment spans residues 389–409 (GILFLLLFSFLSALSFTAAIC). At 410–449 (SLPRAWKRFQNRDLDYDDMDEDDPFNPQESKRFVQWQSSI) the chain is on the cytoplasmic side.

It belongs to the tweety family. In terms of assembly, homotetramer; disulfide-linked. Homodimer.

It localises to the cell membrane. The catalysed reaction is chloride(in) = chloride(out). The enzyme catalyses L-glutamate(out) = L-glutamate(in). Its function is as follows. May act as a calcium-independent, swelling-dependent volume-regulated anion channel (VRAC-swell) which plays a pivotal role in the process of regulatory volume decrease (RVD) in the brain through the efflux of anions like chloride and organic osmolytes like glutamate. The polypeptide is Protein tweety homolog 1 (ttyh1) (Xenopus tropicalis (Western clawed frog)).